We begin with the raw amino-acid sequence, 413 residues long: Hemolin (413 aa).

The N-terminal stretch at 1–19 is a signal peptide; the sequence is MAFKSIAVLSACIIVGSAL. Ig-like C2-type domains follow at residues 25–112, 122–211, 233–322, and 327–413; these read PVLK…RVIS, PAKT…EEVV, PQYV…LKLT, and PKYE…VQVN. Intrachain disulfides connect Cys-46-Cys-97, Cys-140-Cys-199, Cys-252-Cys-305, and Cys-349-Cys-395. Asn-283 carries N-linked (GlcNAc...) asparagine glycosylation.

It belongs to the hemolin family. Hemolymph.

It localises to the secreted. The protein localises to the extracellular space. Insect-immune protein. Forms a protein complex at the bacterial surface. Can inhibit hemocyte aggregation. The polypeptide is Hemolin (Hyalophora cecropia (Cecropia moth)).